Consider the following 177-residue polypeptide: uncharacterized protein (177 aa).

The N-acetyltransferase domain occupies 10-177; sequence LILRQITDQD…NVYSIVKPRE (168 aa).

It belongs to the acetyltransferase family.

This is an uncharacterized protein from Bacillus subtilis (strain 168).